Reading from the N-terminus, the 310-residue chain is tRNA pseudouridine synthase B (310 aa).

Asp-47 serves as the catalytic Nucleophile.

The protein belongs to the pseudouridine synthase TruB family. Type 1 subfamily.

The catalysed reaction is uridine(55) in tRNA = pseudouridine(55) in tRNA. Its function is as follows. Responsible for synthesis of pseudouridine from uracil-55 in the psi GC loop of transfer RNAs. This Psychromonas ingrahamii (strain DSM 17664 / CCUG 51855 / 37) protein is tRNA pseudouridine synthase B.